The chain runs to 199 residues: Peptidyl-tRNA hydrolase (199 aa).

Position 18 (tyrosine 18) interacts with tRNA. Histidine 23 serves as the catalytic Proton acceptor. Residues tyrosine 69, asparagine 71, and asparagine 117 each contribute to the tRNA site.

This sequence belongs to the PTH family. In terms of assembly, monomer.

It localises to the cytoplasm. It carries out the reaction an N-acyl-L-alpha-aminoacyl-tRNA + H2O = an N-acyl-L-amino acid + a tRNA + H(+). Functionally, hydrolyzes ribosome-free peptidyl-tRNAs (with 1 or more amino acids incorporated), which drop off the ribosome during protein synthesis, or as a result of ribosome stalling. Catalyzes the release of premature peptidyl moieties from peptidyl-tRNA molecules trapped in stalled 50S ribosomal subunits, and thus maintains levels of free tRNAs and 50S ribosomes. This Prochlorococcus marinus (strain MIT 9515) protein is Peptidyl-tRNA hydrolase.